We begin with the raw amino-acid sequence, 156 residues long: Deoxyuridine 5'-triphosphate nucleotidohydrolase (156 aa).

Substrate is bound by residues 76–78, asparagine 89, 93–95, and lysine 103; these read RSG and TVD.

This sequence belongs to the dUTPase family. It depends on Mg(2+) as a cofactor.

The enzyme catalyses dUTP + H2O = dUMP + diphosphate + H(+). It participates in pyrimidine metabolism; dUMP biosynthesis; dUMP from dCTP (dUTP route): step 2/2. Functionally, this enzyme is involved in nucleotide metabolism: it produces dUMP, the immediate precursor of thymidine nucleotides and it decreases the intracellular concentration of dUTP so that uracil cannot be incorporated into DNA. The protein is Deoxyuridine 5'-triphosphate nucleotidohydrolase of Rhizobium etli (strain ATCC 51251 / DSM 11541 / JCM 21823 / NBRC 15573 / CFN 42).